Here is a 78-residue protein sequence, read N- to C-terminus: Small ribosomal subunit protein bS16 (78 aa).

Belongs to the bacterial ribosomal protein bS16 family.

This is Small ribosomal subunit protein bS16 from Thermodesulfovibrio yellowstonii (strain ATCC 51303 / DSM 11347 / YP87).